Consider the following 286-residue polypeptide: ATP synthase gamma chain (286 aa).

This sequence belongs to the ATPase gamma chain family. F-type ATPases have 2 components, CF(1) - the catalytic core - and CF(0) - the membrane proton channel. CF(1) has five subunits: alpha(3), beta(3), gamma(1), delta(1), epsilon(1). CF(0) has three main subunits: a, b and c.

It is found in the cell membrane. Functionally, produces ATP from ADP in the presence of a proton gradient across the membrane. The gamma chain is believed to be important in regulating ATPase activity and the flow of protons through the CF(0) complex. This is ATP synthase gamma chain from Bacillus cereus (strain G9842).